The following is a 348-amino-acid chain: Anthranilate phosphoribosyltransferase (348 aa).

Residues Gly91, 94–95, Thr99, 101–104, 119–127, and Ser131 each bind 5-phospho-alpha-D-ribose 1-diphosphate; these read GD, NIST, and KHGNRSASG. An anthranilate-binding site is contributed by Gly91. Residue Ser103 participates in Mg(2+) binding. Residue Asn122 participates in anthranilate binding. Residue Arg177 coordinates anthranilate. Asp236 and Glu237 together coordinate Mg(2+).

Belongs to the anthranilate phosphoribosyltransferase family. Homodimer. The cofactor is Mg(2+).

It carries out the reaction N-(5-phospho-beta-D-ribosyl)anthranilate + diphosphate = 5-phospho-alpha-D-ribose 1-diphosphate + anthranilate. The protein operates within amino-acid biosynthesis; L-tryptophan biosynthesis; L-tryptophan from chorismate: step 2/5. Catalyzes the transfer of the phosphoribosyl group of 5-phosphorylribose-1-pyrophosphate (PRPP) to anthranilate to yield N-(5'-phosphoribosyl)-anthranilate (PRA). The polypeptide is Anthranilate phosphoribosyltransferase (Synechococcus sp. (strain ATCC 27144 / PCC 6301 / SAUG 1402/1) (Anacystis nidulans)).